A 195-amino-acid chain; its full sequence is ATP-dependent Clp protease proteolytic subunit (195 aa).

The active-site Nucleophile is the Ser-98. Residue His-123 is part of the active site.

Belongs to the peptidase S14 family. As to quaternary structure, fourteen ClpP subunits assemble into 2 heptameric rings which stack back to back to give a disk-like structure with a central cavity, resembling the structure of eukaryotic proteasomes.

It localises to the cytoplasm. It catalyses the reaction Hydrolysis of proteins to small peptides in the presence of ATP and magnesium. alpha-casein is the usual test substrate. In the absence of ATP, only oligopeptides shorter than five residues are hydrolyzed (such as succinyl-Leu-Tyr-|-NHMec, and Leu-Tyr-Leu-|-Tyr-Trp, in which cleavage of the -Tyr-|-Leu- and -Tyr-|-Trp bonds also occurs).. In terms of biological role, cleaves peptides in various proteins in a process that requires ATP hydrolysis. Has a chymotrypsin-like activity. Plays a major role in the degradation of misfolded proteins. The sequence is that of ATP-dependent Clp protease proteolytic subunit from Wolinella succinogenes (strain ATCC 29543 / DSM 1740 / CCUG 13145 / JCM 31913 / LMG 7466 / NCTC 11488 / FDC 602W) (Vibrio succinogenes).